The sequence spans 586 residues: Chaperonin 60 subunit alpha 1, chloroplastic (586 aa).

The N-terminal 46 residues, 1 to 46 (MASANALSSASVLCSSRQSKLGGGNQQQGQRVSYNKRTIRRFSVRA), are a transit peptide targeting the chloroplast. S90 carries the phosphoserine modification.

This sequence belongs to the chaperonin (HSP60) family. In terms of assembly, part of the Cpn60 complex composed of 7 alpha and 7 beta subunits. This complex shows ATPase activity. The Cpn60 complex interacts with the Cpn10 complex. Expressed in leaves, stems, siliques and flowers.

It localises to the plastid. It is found in the chloroplast. In terms of biological role, binds RuBisCO small and large subunits and is implicated in the assembly of the enzyme oligomer. Involved in protein assisted folding. Required for proper chloroplast development. The sequence is that of Chaperonin 60 subunit alpha 1, chloroplastic (CPN60A1) from Arabidopsis thaliana (Mouse-ear cress).